A 100-amino-acid chain; its full sequence is NADH-quinone oxidoreductase subunit K 2 (100 aa).

The next 3 membrane-spanning stretches (helical) occupy residues Leu4 to Val24, Ile29 to Phe49, and Ile60 to Met80.

The protein belongs to the complex I subunit 4L family. NDH-1 is composed of 14 different subunits. Subunits NuoA, H, J, K, L, M, N constitute the membrane sector of the complex.

The protein localises to the cell inner membrane. The catalysed reaction is a quinone + NADH + 5 H(+)(in) = a quinol + NAD(+) + 4 H(+)(out). In terms of biological role, NDH-1 shuttles electrons from NADH, via FMN and iron-sulfur (Fe-S) centers, to quinones in the respiratory chain. The immediate electron acceptor for the enzyme in this species is believed to be ubiquinone. Couples the redox reaction to proton translocation (for every two electrons transferred, four hydrogen ions are translocated across the cytoplasmic membrane), and thus conserves the redox energy in a proton gradient. This is NADH-quinone oxidoreductase subunit K 2 from Geotalea uraniireducens (strain Rf4) (Geobacter uraniireducens).